We begin with the raw amino-acid sequence, 120 residues long: UPF0231 protein YacL (120 aa).

The protein belongs to the UPF0231 family.

The sequence is that of UPF0231 protein YacL from Escherichia coli (strain SMS-3-5 / SECEC).